The chain runs to 62 residues: DNA-directed RNA polymerase subunit Rpo10 (62 aa).

Zn(2+)-binding residues include cysteine 6, cysteine 9, cysteine 43, and cysteine 44.

The protein belongs to the archaeal Rpo10/eukaryotic RPB10 RNA polymerase subunit family. As to quaternary structure, part of the RNA polymerase complex. It depends on Zn(2+) as a cofactor.

The protein resides in the cytoplasm. It carries out the reaction RNA(n) + a ribonucleoside 5'-triphosphate = RNA(n+1) + diphosphate. In terms of biological role, DNA-dependent RNA polymerase (RNAP) catalyzes the transcription of DNA into RNA using the four ribonucleoside triphosphates as substrates. This Methanoculleus marisnigri (strain ATCC 35101 / DSM 1498 / JR1) protein is DNA-directed RNA polymerase subunit Rpo10.